We begin with the raw amino-acid sequence, 827 residues long: Leucine--tRNA ligase (827 aa).

The short motif at 42–52 (PYPSGKLHMGH) is the 'HIGH' region element. A 'KMSKS' region motif is present at residues 581–585 (KMSKS). Lys584 lines the ATP pocket.

The protein belongs to the class-I aminoacyl-tRNA synthetase family.

Its subcellular location is the cytoplasm. It catalyses the reaction tRNA(Leu) + L-leucine + ATP = L-leucyl-tRNA(Leu) + AMP + diphosphate. This chain is Leucine--tRNA ligase, found in Desulforamulus reducens (strain ATCC BAA-1160 / DSM 100696 / MI-1) (Desulfotomaculum reducens).